A 246-amino-acid chain; its full sequence is Small ribosomal subunit protein uS2 (246 aa).

It belongs to the universal ribosomal protein uS2 family.

This Pseudomonas aeruginosa (strain LESB58) protein is Small ribosomal subunit protein uS2.